A 295-amino-acid polypeptide reads, in one-letter code: uncharacterized protein (295 aa).

The protein belongs to the ROK (NagC/XylR) family.

This is an uncharacterized protein from Clostridium perfringens (strain 13 / Type A).